We begin with the raw amino-acid sequence, 247 residues long: Adenosine 5'-phosphosulfate reductase (247 aa).

[4Fe-4S] cluster-binding residues include Cys133, Cys134, Cys216, and Cys219. Residues 222–247 (KPAPGSDPRSGRWAGQAKTECGLHAS) are disordered. Cys242 serves as the catalytic Nucleophile; cysteine thiosulfonate intermediate.

The protein belongs to the PAPS reductase family. CysH subfamily. Requires [4Fe-4S] cluster as cofactor.

The protein localises to the cytoplasm. The enzyme catalyses [thioredoxin]-disulfide + sulfite + AMP + 2 H(+) = adenosine 5'-phosphosulfate + [thioredoxin]-dithiol. It functions in the pathway sulfur metabolism; hydrogen sulfide biosynthesis; sulfite from sulfate. Its function is as follows. Catalyzes the formation of sulfite from adenosine 5'-phosphosulfate (APS) using thioredoxin as an electron donor. The protein is Adenosine 5'-phosphosulfate reductase of Rhodococcus opacus (strain B4).